Reading from the N-terminus, the 156-residue chain is Ribosomal RNA large subunit methyltransferase H (156 aa).

Residues leucine 73, glycine 104, and 123–128 (LSSLTL) contribute to the S-adenosyl-L-methionine site.

Belongs to the RNA methyltransferase RlmH family. Homodimer.

It is found in the cytoplasm. It carries out the reaction pseudouridine(1915) in 23S rRNA + S-adenosyl-L-methionine = N(3)-methylpseudouridine(1915) in 23S rRNA + S-adenosyl-L-homocysteine + H(+). Functionally, specifically methylates the pseudouridine at position 1915 (m3Psi1915) in 23S rRNA. In Neisseria meningitidis serogroup C (strain 053442), this protein is Ribosomal RNA large subunit methyltransferase H.